The following is an 848-amino-acid chain: Dolabradiene synthase KSL4, chloroplastic (848 aa).

A chloroplast-targeting transit peptide spans 1-64 (MASLSFASSH…SRMPRNVDTH (64 aa)). A disordered region spans residues 148–168 (QRSDGSWGPDGGSGDHPSSPL). Mg(2+) contacts are provided by aspartate 597, aspartate 601, asparagine 742, serine 746, and glutamate 750. The DDXXD motif motif lies at 597-601 (DDLFD).

This sequence belongs to the terpene synthase family. Mg(2+) is required as a cofactor.

The protein resides in the plastid. It localises to the chloroplast. The catalysed reaction is ent-copalyl diphosphate = dolabradiene + diphosphate. Involved in the production of antifungal dolabralexin phytoalexins in response to biotic and abiotic stresses. In response to fungal infection and in associtation with AN2, is involved in the production dolabradiene, a type of antifungal phytoalexin. Converts ent-copalyl disphosphate (ent-CPP) to dolabradiene. The sequence is that of Dolabradiene synthase KSL4, chloroplastic from Zea mays (Maize).